We begin with the raw amino-acid sequence, 261 residues long: Glucosamine-6-phosphate deaminase (261 aa).

The Proton acceptor; for enolization step role is filled by Asp67. Asn136 functions as the For ring-opening step in the catalytic mechanism. Catalysis depends on His138, which acts as the Proton acceptor; for ring-opening step. The For ring-opening step role is filled by Glu143.

The protein belongs to the glucosamine/galactosamine-6-phosphate isomerase family. NagB subfamily.

The enzyme catalyses alpha-D-glucosamine 6-phosphate + H2O = beta-D-fructose 6-phosphate + NH4(+). Its pathway is amino-sugar metabolism; N-acetylneuraminate degradation; D-fructose 6-phosphate from N-acetylneuraminate: step 5/5. Catalyzes the reversible isomerization-deamination of glucosamine 6-phosphate (GlcN6P) to form fructose 6-phosphate (Fru6P) and ammonium ion. The polypeptide is Glucosamine-6-phosphate deaminase (Cutibacterium acnes (strain DSM 16379 / KPA171202) (Propionibacterium acnes)).